Consider the following 579-residue polypeptide: MFS-type transporter sphD (579 aa).

The tract at residues 17–62 (SAFAVRAEPDSEPVSEKQGTAETDAETGAGGTEVPAERNGEDDVER) is disordered. A compositionally biased stretch (basic and acidic residues) spans 51–62 (PAERNGEDDVER). 8 helical membrane passes run 73 to 93 (AFIGLAASMFVFQVDATALGI), 110 to 130 (FWANLSYTLCGLVMQPVWASI), 138 to 158 (PPLYVSMALFFIGSIVFAVAQ), 168 to 188 (VLQGFGGGGIDVLAEVILADM), 200 to 220 (LMAIPMAIGNIMGPSVGALFA), 227 to 247 (WIGWVNLPLLGIGTPLVFFFL), 267 to 287 (WIGMVLVVVGITIFVLPLSWA), and 294 to 314 (GAWQTLVPLFLGVAVLVIFAF). N-linked (GlcNAc...) asparagine glycosylation is present at N335. 6 consecutive transmembrane segments (helical) span residues 338 to 358 (LVGGFLHGAVLVSLLQYLPLI), 367 to 391 (AILSAVSLLPTVIISVVVAAISMML), 398 to 419 (YVWILRLAWVILTLGTGLLALF), 429 to 449 (LGLPILWGAGVALLRLNLLPM), 460 to 480 (GLAIGQFLTIRMFGGLVGLTI), and 541 to 561 (FQTIFYTMTGLSGLGLVTSLF).

This sequence belongs to the major facilitator superfamily.

Its subcellular location is the membrane. MFS-type transporter; part of the gene cluster that mediates the biosynthesis of sphingofungins, bioactive molecules acting as sphingolipid inhibitors via inhibiting serine palmitoyl transferase (SPT). The chain is MFS-type transporter sphD from Aspergillus fumigatus (strain CBS 144.89 / FGSC A1163 / CEA10) (Neosartorya fumigata).